The primary structure comprises 503 residues: Cytochrome P450 3A29 (503 aa).

C442 is a binding site for heme.

The protein belongs to the cytochrome P450 family. Heme is required as a cofactor.

It localises to the endoplasmic reticulum membrane. The protein resides in the microsome membrane. It carries out the reaction an organic molecule + reduced [NADPH--hemoprotein reductase] + O2 = an alcohol + oxidized [NADPH--hemoprotein reductase] + H2O + H(+). Cytochromes P450 are a group of heme-thiolate monooxygenases. In liver microsomes, this enzyme is involved in an NADPH-dependent electron transport pathway. It oxidizes a variety of structurally unrelated compounds, including steroids, fatty acids, and xenobiotics. The chain is Cytochrome P450 3A29 (CYP3A29) from Sus scrofa (Pig).